A 259-amino-acid polypeptide reads, in one-letter code: Zinc import ATP-binding protein ZnuC (259 aa).

An ABC transporter domain is found at 22-238 (VEARGLTVRR…PEYRALFGAH (217 aa)). 54 to 61 (GPNGSGKS) serves as a coordination point for ATP.

The protein belongs to the ABC transporter superfamily. Zinc importer (TC 3.A.1.15.5) family. In terms of assembly, the complex is composed of two ATP-binding proteins (ZnuC), two transmembrane proteins (ZnuB) and a solute-binding protein (ZnuA).

It is found in the cell inner membrane. The catalysed reaction is Zn(2+)(out) + ATP(in) + H2O(in) = Zn(2+)(in) + ADP(in) + phosphate(in) + H(+)(in). In terms of biological role, part of the ABC transporter complex ZnuABC involved in zinc import. Responsible for energy coupling to the transport system. The sequence is that of Zinc import ATP-binding protein ZnuC from Alkalilimnicola ehrlichii (strain ATCC BAA-1101 / DSM 17681 / MLHE-1).